The sequence spans 752 residues: Ribosomal protein S6 kinase 2 alpha (752 aa).

In terms of domain architecture, Protein kinase 1 spans 80-339; the sequence is FELLKVLGQG…AEEIKRHPFY (260 aa). Residues 86 to 94 and Lys-112 each bind ATP; that span reads LGQGSFGKV. Catalysis depends on Asp-205, which acts as the Proton acceptor. Position 239 is a phosphoserine (Ser-239). One can recognise an AGC-kinase C-terminal domain in the interval 340–409; it reads STIDWNKLYR…VATGLMEDSK (70 aa). At Thr-377 the chain carries Phosphothreonine. Ser-381 is subject to Phosphoserine. Phosphoserine; by autocatalysis is present on Ser-398. Positions 435-692 constitute a Protein kinase 2 domain; that stretch reads YVVKEAIGVG…AKQVLQHPWI (258 aa). ATP is bound by residues 441–449 and Lys-464; that span reads IGVGSYSVC. Catalysis depends on Asp-552, which acts as the Proton acceptor. Thr-590 is subject to Phosphothreonine. Residue Ser-749 is modified to Phosphoserine.

It belongs to the protein kinase superfamily. AGC Ser/Thr protein kinase family. S6 kinase subfamily. It depends on Mg(2+) as a cofactor. Post-translationally, autophosphorylated on Ser-398, as part of the activation process. In terms of tissue distribution, small and large intestine, spleen, stomach, and bursa, and to a lesser extent lung and kidney.

It carries out the reaction L-seryl-[protein] + ATP = O-phospho-L-seryl-[protein] + ADP + H(+). The enzyme catalyses L-threonyl-[protein] + ATP = O-phospho-L-threonyl-[protein] + ADP + H(+). Activated by multiple phosphorylations on threonine and serine residues. In terms of biological role, serine/threonine kinase that may play a role in mediating the growth-factor and stress induced activation of transcription. This Gallus gallus (Chicken) protein is Ribosomal protein S6 kinase 2 alpha (RPS6KA).